A 445-amino-acid chain; its full sequence is Inner membrane metabolite transport protein YgcS (445 aa).

The Cytoplasmic segment spans residues 1–22; it reads MNTSPVRMDDLPLNRFHCRIAA. The helical transmembrane segment at 23 to 43 threads the bilayer; sequence LTFGAHLTDGYVLGVIGYAII. Over 44 to 56 the chain is Periplasmic; sequence QLTPAMQLTPFMA. A helical transmembrane segment spans residues 57–77; it reads GMIGGSALLGLFLGSLVLGWI. Residues 78–85 are Cytoplasmic-facing; it reads SDHIGRQK. The chain crosses the membrane as a helical span at residues 86–106; that stretch reads IFTFSFLLITLASFLQFFATT. Residues 107–114 lie on the Periplasmic side of the membrane; sequence PEHLIGLR. A helical membrane pass occupies residues 115 to 135; sequence ILIGIGLGGDYSVGHTLLAEF. The Cytoplasmic portion of the chain corresponds to 136-142; it reads SPRRHRG. A helical membrane pass occupies residues 143–163; the sequence is ILLGAFSVVWTVGYVLASIAG. The Periplasmic portion of the chain corresponds to 164-175; that stretch reads HHFISENPEAWR. The chain crosses the membrane as a helical span at residues 176–196; that stretch reads WLLASAALPALLITLLRWGTP. The Cytoplasmic segment spans residues 197 to 253; sequence ESPRWLLRQGRFAEAHAIVHRYFGPHVLLGDEVVTATHKHIKTLFSSRYWRRTAFNS. Residues 254–274 traverse the membrane as a helical segment; sequence VFFVCLVIPWFVIYTWLPTIA. Residues 275-286 are Periplasmic-facing; sequence QTIGLEDALTAS. Residues 287 to 307 form a helical membrane-spanning segment; sequence LMLNALLIVGALLGLVLTHLL. At 308–311 the chain is on the cytoplasmic side; it reads AHRK. Residues 312–332 traverse the membrane as a helical segment; sequence FLLGSFLLLAATLVVMACLPS. The Periplasmic portion of the chain corresponds to 333–337; that stretch reads GSSLT. The helical transmembrane segment at 338–358 threads the bilayer; it reads LLLFVLFSTTISAVSNLVGIL. The Cytoplasmic portion of the chain corresponds to 359–369; sequence PAESFPTDIRS. Residues 370–390 traverse the membrane as a helical segment; sequence LGVGFATAMSRLGAAVSTGLL. The Periplasmic segment spans residues 391 to 400; the sequence is PWVLAQWGMQ. The helical transmembrane segment at 401-421 threads the bilayer; that stretch reads VTLLLLATVLLVGFVVTWLWA. At 422 to 445 the chain is on the cytoplasmic side; that stretch reads PETKALPLVAAGNVGGANEHSVSV.

The protein belongs to the major facilitator superfamily. Sugar transporter (TC 2.A.1.1) family.

Its subcellular location is the cell inner membrane. The sequence is that of Inner membrane metabolite transport protein YgcS (ygcS) from Escherichia coli (strain K12).